The primary structure comprises 916 residues: Protein translocase subunit SecA (916 aa).

Residues Gln87, 105-109 (GEGKT), and Asp507 each bind ATP. Zn(2+)-binding residues include Cys900, Cys902, Cys911, and His912.

Belongs to the SecA family. As to quaternary structure, monomer and homodimer. Part of the essential Sec protein translocation apparatus which comprises SecA, SecYEG and auxiliary proteins SecDF-YajC and YidC. It depends on Zn(2+) as a cofactor.

It localises to the cell inner membrane. The protein localises to the cytoplasm. The enzyme catalyses ATP + H2O + cellular proteinSide 1 = ADP + phosphate + cellular proteinSide 2.. Functionally, part of the Sec protein translocase complex. Interacts with the SecYEG preprotein conducting channel. Has a central role in coupling the hydrolysis of ATP to the transfer of proteins into and across the cell membrane, serving both as a receptor for the preprotein-SecB complex and as an ATP-driven molecular motor driving the stepwise translocation of polypeptide chains across the membrane. This chain is Protein translocase subunit SecA, found in Neisseria gonorrhoeae (strain ATCC 700825 / FA 1090).